The sequence spans 970 residues: Insulin-degrading enzyme-like 1, peroxisomal (970 aa).

Position 69 (His69) interacts with Zn(2+). Glu72 acts as the Proton acceptor in catalysis. Residue His73 participates in Zn(2+) binding. Glu143 is an active-site residue. Residue Glu150 participates in Zn(2+) binding.

Belongs to the peptidase M16 family. The cofactor is Zn(2+).

The protein resides in the peroxisome. Peptidase that might be involved in pathogen or wound response. Not required for peroxisome biogenesis, indole-3-butyric acid (IBA) metabolism, fatty acid beta-oxidation or degradation of glyoxylate cycle enzymes during seedling development. The chain is Insulin-degrading enzyme-like 1, peroxisomal (PXM16) from Arabidopsis thaliana (Mouse-ear cress).